We begin with the raw amino-acid sequence, 394 residues long: MVGTTSSLDEIRKAQRADGPAGILAIGTANPANHVLQAEYPDYYFRITNSEHMTDLKEKFKRMCDKSTIRKRHMHLTEEFLKENPNMCAYMAPSLDARQDIVVVEVPKLGKEAAVKAIKEWGQPKSKITHVVFCTTSGVDMPGADYQLTKLLGLRPSVKRLMMYQQGCFAGGTVLRLAKDLAENNRGARVLVVCSEITAVTFRGPSDTHLDSLVGQALFSDGAAALIVGSDPDVSAGEKPIFEMVSAAQTILPDSDGAIDGHLREVGITFHLLKDVPGLISKNIEKSLDEAFKPLGISDWNSLFWIAHPGGPAILDDVEKKLGLKAEKMRATRHVLSEYGNMSSACVLFILDEMRRKSLDDGVATTGEGLEWGVLFGFGPGLTVETVVLHSVPV.

C168 is a catalytic residue.

It belongs to the thiolase-like superfamily. Chalcone/stilbene synthases family.

The catalysed reaction is (E)-4-coumaroyl-CoA + 3 malonyl-CoA + 3 H(+) = 2',4,4',6'-tetrahydroxychalcone + 3 CO2 + 4 CoA. It functions in the pathway secondary metabolite biosynthesis; flavonoid biosynthesis. Functionally, the primary product of this enzyme is 4,2',4',6'-tetrahydroxychalcone (also termed naringenin-chalcone or chalcone) which can under specific conditions spontaneously isomerize into naringenin. The chain is Chalcone synthase (CHS) from Raphanus sativus (Radish).